Consider the following 110-residue polypeptide: Large ribosomal subunit protein P1 (110 aa).

A disordered region spans residues 87–110 (PAAEEKKEEEKEESDEDMGFGLFD).

Belongs to the eukaryotic ribosomal protein P1/P2 family. As to quaternary structure, P1 and P2 exist as dimers at the large ribosomal subunit. Phosphorylated.

Its function is as follows. Plays an important role in the elongation step of protein synthesis. This Alternaria alternata (Alternaria rot fungus) protein is Large ribosomal subunit protein P1 (ALTA12).